Here is a 493-residue protein sequence, read N- to C-terminus: Matrilin-1 (493 aa).

An N-terminal signal peptide occupies residues 1-23 (MDGIFCALPLSLLLLLQSCGVWG). The VWFA 1 domain maps to 24–220 (APPQPRGTLC…THKFQEAFCV (197 aa)). N74 carries an N-linked (GlcNAc...) asparagine glycan. The region spanning 221–261 (VSDLCATGDHDCEQICISTPGSYKCACKEGFTLNNDGKTCS) is the EGF-like domain. Disulfide bonds link C225-C236, C232-C245, and C247-C260. Positions 262–450 (ACSGGSGSAL…GKKLQMKICV (189 aa)) constitute a VWFA 2 domain. The stretch at 462-492 (KFQTKVEELINTLQQKLEAVAKRIEALENKI) forms a coiled coil.

Homotrimer. As to expression, expressed in xyphoid cartilage and chondrocytes (at protein level).

Its subcellular location is the secreted. The protein localises to the extracellular space. It localises to the extracellular matrix. In terms of biological role, a major component of the extracellular matrix of non-articular cartilage. Binds to type 2 collagens and forms long concatenated protein networks as part of the extracellular matrix. Required for the network-like organization and bundling of collagen fibrils surrounding chondrocytes in the zones of maturation and hypertrophy. Required for mechanotransduction and adaption to mechanical loading in cartilage chondrocytes, resulting in an increase in expression of the extracellular matrix components ACAN and COL2A1. Acts as a moderator of angiogenesis in response to injury. This is Matrilin-1 from Gallus gallus (Chicken).